The sequence spans 170 residues: Zinc finger matrin-type protein 5 (170 aa).

A C3H1-type zinc finger spans residues 51–79 (EQNKRPCRKFLLTGQCDFGSNCRFSHMSE). Positions 150–170 (PPSLRAPPPGGWPLQPRVQWG) are disordered.

Component of the U11/U12 snRNPs that are part of the U12-type spliceosome. Not found in the major spliceosome.

The protein localises to the nucleus. This Homo sapiens (Human) protein is Zinc finger matrin-type protein 5 (ZMAT5).